Consider the following 106-residue polypeptide: Protein aveugle (106 aa).

Residues 26–91 form the SAM domain; sequence WTVSDVLKWY…WREIVKQRLK (66 aa).

As to quaternary structure, interacts with the SAM domain of cnk.

It localises to the cytoplasm. The protein localises to the membrane. In terms of biological role, required for normal photoreceptor differentiation between Ras and Raf for EGFR signaling in the eye and for mitogen-activated protein kinase phosphorylation. Probably acts together with Cnk to promote Raf activation, perhaps by recruiting an activating kinase. This is Protein aveugle (ave) from Drosophila melanogaster (Fruit fly).